The primary structure comprises 172 residues: dCTP deaminase (172 aa).

Residues 97-102 and aspartate 113 contribute to the dCTP site; that span reads RSSFAR. The active-site Proton donor/acceptor is glutamate 123. Residues tyrosine 155 and glutamine 162 each coordinate dCTP.

It belongs to the dCTP deaminase family. In terms of assembly, homotrimer.

It catalyses the reaction dCTP + H2O + H(+) = dUTP + NH4(+). The protein operates within pyrimidine metabolism; dUMP biosynthesis; dUMP from dCTP (dUTP route): step 1/2. Its function is as follows. Catalyzes the deamination of dCTP to dUTP. The protein is dCTP deaminase of Metallosphaera sedula (strain ATCC 51363 / DSM 5348 / JCM 9185 / NBRC 15509 / TH2).